The following is a 73-amino-acid chain: Putative membrane protein insertion efficiency factor (73 aa).

The protein belongs to the UPF0161 family.

It localises to the cell inner membrane. Functionally, could be involved in insertion of integral membrane proteins into the membrane. The polypeptide is Putative membrane protein insertion efficiency factor (Bacteroides fragilis (strain ATCC 25285 / DSM 2151 / CCUG 4856 / JCM 11019 / LMG 10263 / NCTC 9343 / Onslow / VPI 2553 / EN-2)).